The primary structure comprises 1232 residues: DNA-directed RNA polymerase subunit beta (1232 aa).

The disordered stretch occupies residues serine 1170–histidine 1232. Acidic residues predominate over residues valine 1171–valine 1180. The segment covering proline 1189–glutamate 1198 has biased composition (basic and acidic residues). Positions aspartate 1199 to histidine 1232 are enriched in acidic residues.

The protein belongs to the RNA polymerase beta chain family. In terms of assembly, the RNAP catalytic core consists of 2 alpha, 1 beta, 1 beta' and 1 omega subunit. When a sigma factor is associated with the core the holoenzyme is formed, which can initiate transcription.

The enzyme catalyses RNA(n) + a ribonucleoside 5'-triphosphate = RNA(n+1) + diphosphate. Its function is as follows. DNA-dependent RNA polymerase catalyzes the transcription of DNA into RNA using the four ribonucleoside triphosphates as substrates. The chain is DNA-directed RNA polymerase subunit beta from Clostridium botulinum (strain Hall / ATCC 3502 / NCTC 13319 / Type A).